The sequence spans 297 residues: Phosphatidylglycerol--prolipoprotein diacylglyceryl transferase (297 aa).

Helical transmembrane passes span 20-40 (FITI…GLFV), 57-77 (EILP…YVIF), 105-125 (AVWE…ISII), and 133-153 (INLK…QSIG). Arg154 lines the a 1,2-diacyl-sn-glycero-3-phospho-(1'-sn-glycerol) pocket. The next 3 helical transmembrane spans lie at 193–213 (PTFL…IIIF), 225–245 (GFIS…IEGL), and 266–286 (AQFI…FLRL).

It belongs to the Lgt family.

It is found in the cell inner membrane. It carries out the reaction L-cysteinyl-[prolipoprotein] + a 1,2-diacyl-sn-glycero-3-phospho-(1'-sn-glycerol) = an S-1,2-diacyl-sn-glyceryl-L-cysteinyl-[prolipoprotein] + sn-glycerol 1-phosphate + H(+). It participates in protein modification; lipoprotein biosynthesis (diacylglyceryl transfer). Functionally, catalyzes the transfer of the diacylglyceryl group from phosphatidylglycerol to the sulfhydryl group of the N-terminal cysteine of a prolipoprotein, the first step in the formation of mature lipoproteins. This chain is Phosphatidylglycerol--prolipoprotein diacylglyceryl transferase, found in Prochlorococcus marinus (strain MIT 9215).